The primary structure comprises 208 residues: Thiamine-phosphate synthase (208 aa).

4-amino-2-methyl-5-(diphosphooxymethyl)pyrimidine-binding positions include 37-39 and Asn70; that span reads QVR. Residues Asp71 and Asp90 each contribute to the Mg(2+) site. Thr109 is a binding site for 4-amino-2-methyl-5-(diphosphooxymethyl)pyrimidine. A 2-[(2R,5Z)-2-carboxy-4-methylthiazol-5(2H)-ylidene]ethyl phosphate-binding site is contributed by 135-137; it reads TTS. Lys138 is a 4-amino-2-methyl-5-(diphosphooxymethyl)pyrimidine binding site. 2-[(2R,5Z)-2-carboxy-4-methylthiazol-5(2H)-ylidene]ethyl phosphate is bound at residue Gly166.

This sequence belongs to the thiamine-phosphate synthase family. Mg(2+) serves as cofactor.

It catalyses the reaction 2-[(2R,5Z)-2-carboxy-4-methylthiazol-5(2H)-ylidene]ethyl phosphate + 4-amino-2-methyl-5-(diphosphooxymethyl)pyrimidine + 2 H(+) = thiamine phosphate + CO2 + diphosphate. The catalysed reaction is 2-(2-carboxy-4-methylthiazol-5-yl)ethyl phosphate + 4-amino-2-methyl-5-(diphosphooxymethyl)pyrimidine + 2 H(+) = thiamine phosphate + CO2 + diphosphate. It carries out the reaction 4-methyl-5-(2-phosphooxyethyl)-thiazole + 4-amino-2-methyl-5-(diphosphooxymethyl)pyrimidine + H(+) = thiamine phosphate + diphosphate. The protein operates within cofactor biosynthesis; thiamine diphosphate biosynthesis; thiamine phosphate from 4-amino-2-methyl-5-diphosphomethylpyrimidine and 4-methyl-5-(2-phosphoethyl)-thiazole: step 1/1. In terms of biological role, condenses 4-methyl-5-(beta-hydroxyethyl)thiazole monophosphate (THZ-P) and 2-methyl-4-amino-5-hydroxymethyl pyrimidine pyrophosphate (HMP-PP) to form thiamine monophosphate (TMP). The sequence is that of Thiamine-phosphate synthase from Salinispora arenicola (strain CNS-205).